The chain runs to 395 residues: Allantoicase (395 aa).

Belongs to the allantoicase family.

It carries out the reaction allantoate + H2O = (S)-ureidoglycolate + urea. The protein operates within nitrogen metabolism; (S)-allantoin degradation; (S)-ureidoglycolate from allantoate (aminidohydrolase route): step 1/1. Functionally, utilization of purines as secondary nitrogen sources, when primary sources are limiting. This is Allantoicase (allc) from Danio rerio (Zebrafish).